Reading from the N-terminus, the 120-residue chain is NAD(P)H-quinone oxidoreductase subunit 3 (120 aa).

The next 3 helical transmembrane spans lie at 10 to 30, 64 to 84, and 89 to 109; these read FLGFLLIAAAVPVLALVTNLI, MFALVFVIFDVETVFLYPWAV, and LGLLAFIEALIFIAILVIALA.

Belongs to the complex I subunit 3 family. As to quaternary structure, NDH-1 can be composed of about 15 different subunits; different subcomplexes with different compositions have been identified which probably have different functions.

It is found in the cellular thylakoid membrane. It carries out the reaction a plastoquinone + NADH + (n+1) H(+)(in) = a plastoquinol + NAD(+) + n H(+)(out). It catalyses the reaction a plastoquinone + NADPH + (n+1) H(+)(in) = a plastoquinol + NADP(+) + n H(+)(out). Functionally, NDH-1 shuttles electrons from an unknown electron donor, via FMN and iron-sulfur (Fe-S) centers, to quinones in the respiratory and/or the photosynthetic chain. The immediate electron acceptor for the enzyme in this species is believed to be plastoquinone. Couples the redox reaction to proton translocation, and thus conserves the redox energy in a proton gradient. Cyanobacterial NDH-1 also plays a role in inorganic carbon-concentration. This is NAD(P)H-quinone oxidoreductase subunit 3 from Prochlorococcus marinus (strain MIT 9301).